A 139-amino-acid polypeptide reads, in one-letter code: Large ribosomal subunit protein mL42 (139 aa).

The transit peptide at 1 to 32 (MAVAAVKWVMSKRTILKHLFPVQNGALYCVCH) directs the protein to the mitochondrion.

The protein belongs to the mitochondrion-specific ribosomal protein mL42 family. In terms of assembly, component of the mitochondrial ribosome large subunit (39S) which comprises a 16S rRNA and about 50 distinct proteins. Component of the mitochondrial ribosome small subunit (28S) which comprises a 12S rRNA and about 30 distinct proteins.

The protein localises to the mitochondrion. This Pongo abelii (Sumatran orangutan) protein is Large ribosomal subunit protein mL42 (MRPL42).